The sequence spans 70 residues: Conotoxin ArMKLT2-0112 (70 aa).

An N-terminal signal peptide occupies residues 1 to 22 (MKLTCVLIIAVLFLTACQLTTG). Positions 23–40 (EQKDHALRSTDKNSKLTR) are excised as a propeptide. The residue at position 41 (Gln-41) is a Pyrrolidone carboxylic acid. 3 disulfide bridges follow: Cys-42–Cys-56, Cys-49–Cys-60, and Cys-55–Cys-67.

This sequence belongs to the conotoxin O1 superfamily. In terms of tissue distribution, expressed by the venom duct.

The protein localises to the secreted. The chain is Conotoxin ArMKLT2-0112 from Conus arenatus (Sand-dusted cone).